We begin with the raw amino-acid sequence, 458 residues long: Gamma aminobutyrate transaminase 2 (458 aa).

114 to 115 lines the pyridoxal 5'-phosphate pocket; the sequence is GS. Position 147 (Tyr147) interacts with substrate. Asp254 serves as a coordination point for pyridoxal 5'-phosphate. Lys283 lines the substrate pocket. Residue Lys283 is modified to N6-(pyridoxal phosphate)lysine.

Belongs to the class-III pyridoxal-phosphate-dependent aminotransferase family. In terms of tissue distribution, expressed in leaves, roots, stems, flowers and fruits. Expressed in carpels, but not in stamens.

The protein localises to the cytoplasm. The enzyme catalyses 4-aminobutanoate + pyruvate = succinate semialdehyde + L-alanine. It carries out the reaction 4-aminobutanoate + glyoxylate = succinate semialdehyde + glycine. Transaminase that degrades gamma-amino butyric acid (GABA) and uses pyruvate or glyoxylate as amino-group acceptor. Cannot use beta-alanine, ornithine, acetylornithine, serine, glycine, asparagine, glutamine, glutamate, valine, leucine, isoleucine, methionine, phenylalanine, histidine, lysine, arginine, aspartate, threonine, tyrosine, tryptophan, proline, or cysteine as amino donors. May be responsible for establishing the GABA gradient in the carpel. The protein is Gamma aminobutyrate transaminase 2 (GABA-TP2) of Solanum lycopersicum (Tomato).